Consider the following 195-residue polypeptide: U8 snoRNA-decapping enzyme (195 aa).

The region spanning 18–173 (GWRHACHALL…IGSAREQLLE (156 aa)) is the Nudix hydrolase domain. Substrate contacts are provided by His-24, Arg-50, and Phe-57. Mn(2+) is bound by residues Gly-59, Glu-76, Glu-80, and His-99. The short motif at 61-82 (FVDTQDRSLEDGLNRELREELG) is the Nudix box element. Gln-170 is a binding site for substrate. Residue Glu-173 participates in Mn(2+) binding.

Belongs to the Nudix hydrolase family. NUDT16 subfamily. As to quaternary structure, homodimer. It depends on Mg(2+) as a cofactor. Mn(2+) serves as cofactor. Co(2+) is required as a cofactor. As to expression, expressed strongly in lung, kidney, adrenal gland, testis, heart and brain.

The protein localises to the nucleus. The protein resides in the nucleoplasm. Its subcellular location is the nucleolus. It localises to the cytoplasm. The catalysed reaction is a 5'-end (N(7)-methyl 5'-triphosphoguanosine)-ribonucleoside in mRNA + H2O = N(7)-methyl-GDP + a 5'-end phospho-ribonucleoside in mRNA + 2 H(+). The enzyme catalyses IDP + H2O = IMP + phosphate + H(+). It carries out the reaction dIDP + H2O = dIMP + phosphate + H(+). It catalyses the reaction a 5'-end NAD(+)-phospho-ribonucleoside in mRNA + H2O = a 5'-end phospho-adenosine-phospho-ribonucleoside in mRNA + beta-nicotinamide D-ribonucleotide + 2 H(+). The catalysed reaction is a 5'-end FAD-phospho-ribonucleoside in mRNA + H2O = a 5'-end phospho-adenosine-phospho-ribonucleoside in mRNA + FMN + 2 H(+). The enzyme catalyses a 5'-end CoA-ribonucleoside in mRNA + H2O = a 5'-end phospho-adenosine-phospho-ribonucleoside in mRNA + (R)-4'-phosphopantetheine + 2 H(+). The phosphatase activity is inhibited by the product IMP. RNA-binding and decapping enzyme that catalyzes the cleavage of the cap structure of snoRNAs and mRNAs in a metal-dependent manner. Part of the U8 snoRNP complex that is required for the accumulation of mature 5.8S and 28S rRNA. Has diphosphatase activity and removes m7G and/or m227G caps from U8 snoRNA and leaves a 5'monophosphate on the RNA. Also catalyzes the cleavage of the cap structure on mRNAs. Does not hydrolyze cap analog structures like 7-methylguanosine nucleoside triphosphate (m7GpppG). Also hydrolysis m7G- and m227G U3-capped RNAs but with less efficiencies. Has broad substrate specificity with manganese or cobalt as cofactor and can act on various RNA species. Binds to the U8 snoRNA; metal is not required for RNA-binding. May play a role in the regulation of snoRNAs and mRNAs degradation. Also acts as a phosphatase; hydrolyzes the non-canonical purine nucleotides inosine diphosphate (IDP) and deoxyinosine diphosphate (dITP) as well as guanosine diphosphate (GDP), deoxyguanosine diphosphate (dGDP), xanthine diphosphate (XDP), inosine triphosphate (ITP) and deoxyinosine triphosphate (ITP) to their respective monophosphate derivatives and does not distinguish between the deoxy- and ribose forms. The order of activity with different substrates is IDP &gt; dIDP &gt;&gt; GDP = dGDP &gt; XDP = ITP = dITP. Binds strongly to GTP, ITP and XTP. Participates in the hydrolysis of dIDP/IDP and probably excludes non-canonical purines from RNA and DNA precursor pools, thus preventing their incorporation into RNA and DNA and avoiding chromosomal lesions. Exhibits decapping activity towards NAD-capped RNAs and FAD-capped RNAs. Exhibits decapping activity towards dpCoA-capped RNAs in vitro. The sequence is that of U8 snoRNA-decapping enzyme (NUDT16) from Homo sapiens (Human).